The sequence spans 145 residues: Endoribonuclease YbeY (145 aa).

Zn(2+)-binding residues include His109, His113, and His119.

It belongs to the endoribonuclease YbeY family. It depends on Zn(2+) as a cofactor.

The protein localises to the cytoplasm. Single strand-specific metallo-endoribonuclease involved in late-stage 70S ribosome quality control and in maturation of the 3' terminus of the 16S rRNA. This chain is Endoribonuclease YbeY, found in Ruthia magnifica subsp. Calyptogena magnifica.